The following is a 251-amino-acid chain: Proteasome subunit alpha type-7 (251 aa).

Belongs to the peptidase T1A family. As to quaternary structure, the 26S proteasome consists of a 20S proteasome core and two 19S regulatory subunits. The 20S proteasome core is composed of 28 subunits that are arranged in four stacked rings, resulting in a barrel-shaped structure. The two end rings are each formed by seven alpha subunits, and the two central rings are each formed by seven beta subunits. The catalytic chamber with the active sites is on the inside of the barrel.

The protein resides in the cytoplasm. The protein localises to the nucleus. The proteasome is a multicatalytic proteinase complex which is characterized by its ability to cleave peptides with Arg, Phe, Tyr, Leu, and Glu adjacent to the leaving group at neutral or slightly basic pH. The proteasome has an ATP-dependent proteolytic activity. This is Proteasome subunit alpha type-7 (psma7) from Carassius auratus (Goldfish).